A 505-amino-acid chain; its full sequence is Maturase K (505 aa).

It belongs to the intron maturase 2 family. MatK subfamily.

It is found in the plastid. The protein resides in the chloroplast. Usually encoded in the trnK tRNA gene intron. Probably assists in splicing its own and other chloroplast group II introns. This Morus indica (Mulberry) protein is Maturase K.